Consider the following 410-residue polypeptide: Iron-sulfur cluster assembly SufBD family protein MTH1150 homolog (410 aa).

It belongs to the iron-sulfur cluster assembly SufBD family.

The chain is Iron-sulfur cluster assembly SufBD family protein MTH1150 homolog from Methanothermobacter thermautotrophicus (strain Winter) (Methanobacterium thermoautotrophicum).